Here is a 172-residue protein sequence, read N- to C-terminus: Large ribosomal subunit protein uL10 (172 aa).

This sequence belongs to the universal ribosomal protein uL10 family. In terms of assembly, part of the ribosomal stalk of the 50S ribosomal subunit. The N-terminus interacts with L11 and the large rRNA to form the base of the stalk. The C-terminus forms an elongated spine to which L12 dimers bind in a sequential fashion forming a multimeric L10(L12)X complex.

Functionally, forms part of the ribosomal stalk, playing a central role in the interaction of the ribosome with GTP-bound translation factors. This Prosthecochloris aestuarii (strain DSM 271 / SK 413) protein is Large ribosomal subunit protein uL10.